The chain runs to 145 residues: Large ribosomal subunit protein uL16 (145 aa).

It belongs to the universal ribosomal protein uL16 family. As to quaternary structure, part of the 50S ribosomal subunit.

In terms of biological role, binds 23S rRNA and is also seen to make contacts with the A and possibly P site tRNAs. The chain is Large ribosomal subunit protein uL16 from Lactobacillus gasseri (strain ATCC 33323 / DSM 20243 / BCRC 14619 / CIP 102991 / JCM 1131 / KCTC 3163 / NCIMB 11718 / NCTC 13722 / AM63).